Reading from the N-terminus, the 393-residue chain is tRNA(Met) cytidine acetate ligase (393 aa).

G81, N142, and R167 together coordinate ATP.

This sequence belongs to the TmcAL family.

Its subcellular location is the cytoplasm. It catalyses the reaction cytidine(34) in elongator tRNA(Met) + acetate + ATP = N(4)-acetylcytidine(34) in elongator tRNA(Met) + AMP + diphosphate. Functionally, catalyzes the formation of N(4)-acetylcytidine (ac(4)C) at the wobble position of elongator tRNA(Met), using acetate and ATP as substrates. First activates an acetate ion to form acetyladenylate (Ac-AMP) and then transfers the acetyl group to tRNA to form ac(4)C34. This Bacillus mycoides (strain KBAB4) (Bacillus weihenstephanensis) protein is tRNA(Met) cytidine acetate ligase.